The following is a 208-amino-acid chain: Urease accessory protein UreG (208 aa).

Position 10–17 (10–17 (GPVGSGKT)) interacts with GTP.

It belongs to the SIMIBI class G3E GTPase family. UreG subfamily. As to quaternary structure, homodimer. UreD, UreF and UreG form a complex that acts as a GTP-hydrolysis-dependent molecular chaperone, activating the urease apoprotein by helping to assemble the nickel containing metallocenter of UreC. The UreE protein probably delivers the nickel.

The protein localises to the cytoplasm. Its function is as follows. Facilitates the functional incorporation of the urease nickel metallocenter. This process requires GTP hydrolysis, probably effectuated by UreG. This Halalkalibacterium halodurans (strain ATCC BAA-125 / DSM 18197 / FERM 7344 / JCM 9153 / C-125) (Bacillus halodurans) protein is Urease accessory protein UreG.